Reading from the N-terminus, the 550-residue chain is CTP synthase (550 aa).

The amidoligase domain stretch occupies residues 1–265; that stretch reads MTKFIFVTGG…DEIVVEQLGL (265 aa). A CTP-binding site is contributed by S13. Position 13 (S13) interacts with UTP. Residue 14–19 participates in ATP binding; that stretch reads SLGKGI. Residue Y54 participates in L-glutamine binding. D71 contributes to the ATP binding site. Mg(2+) contacts are provided by D71 and E139. Residues 146-148, 186-191, and K222 each bind CTP; these read DIE and KTKPTQ. UTP-binding positions include 186–191 and K222; that span reads KTKPTQ. The 252-residue stretch at 290 to 541 folds into the Glutamine amidotransferase type-1 domain; the sequence is TITLVGKYVD…IRAAAEHRRR (252 aa). G351 is an L-glutamine binding site. Residue C378 is the Nucleophile; for glutamine hydrolysis of the active site. Residues 379–382, E402, and R469 contribute to the L-glutamine site; that span reads LGMQ. Residues H514 and E516 contribute to the active site.

This sequence belongs to the CTP synthase family. Homotetramer.

It catalyses the reaction UTP + L-glutamine + ATP + H2O = CTP + L-glutamate + ADP + phosphate + 2 H(+). The enzyme catalyses L-glutamine + H2O = L-glutamate + NH4(+). It carries out the reaction UTP + NH4(+) + ATP = CTP + ADP + phosphate + 2 H(+). The protein operates within pyrimidine metabolism; CTP biosynthesis via de novo pathway; CTP from UDP: step 2/2. Allosterically activated by GTP, when glutamine is the substrate; GTP has no effect on the reaction when ammonia is the substrate. The allosteric effector GTP functions by stabilizing the protein conformation that binds the tetrahedral intermediate(s) formed during glutamine hydrolysis. Inhibited by the product CTP, via allosteric rather than competitive inhibition. Its function is as follows. Catalyzes the ATP-dependent amination of UTP to CTP with either L-glutamine or ammonia as the source of nitrogen. Regulates intracellular CTP levels through interactions with the four ribonucleotide triphosphates. The chain is CTP synthase from Nitrosococcus oceani (strain ATCC 19707 / BCRC 17464 / JCM 30415 / NCIMB 11848 / C-107).